The primary structure comprises 428 residues: Light-independent protochlorophyllide reductase subunit N (428 aa).

3 residues coordinate [4Fe-4S] cluster: Cys-29, Cys-54, and Cys-115.

The protein belongs to the BchN/ChlN family. Protochlorophyllide reductase is composed of three subunits; BchL, BchN and BchB. Forms a heterotetramer of two BchB and two BchN subunits. [4Fe-4S] cluster serves as cofactor.

The enzyme catalyses chlorophyllide a + oxidized 2[4Fe-4S]-[ferredoxin] + 2 ADP + 2 phosphate = protochlorophyllide a + reduced 2[4Fe-4S]-[ferredoxin] + 2 ATP + 2 H2O. The protein operates within porphyrin-containing compound metabolism; bacteriochlorophyll biosynthesis (light-independent). In terms of biological role, component of the dark-operative protochlorophyllide reductase (DPOR) that uses Mg-ATP and reduced ferredoxin to reduce ring D of protochlorophyllide (Pchlide) to form chlorophyllide a (Chlide). This reaction is light-independent. The NB-protein (BchN-BchB) is the catalytic component of the complex. The chain is Light-independent protochlorophyllide reductase subunit N from Roseobacter denitrificans (strain ATCC 33942 / OCh 114) (Erythrobacter sp. (strain OCh 114)).